Reading from the N-terminus, the 200-residue chain is NAD(P)H dehydrogenase (quinone) (200 aa).

Positions 4–191 constitute a Flavodoxin-like domain; that stretch reads VLVLYYSSYG…DIARYQGKHV (188 aa). FMN contacts are provided by residues 10 to 15 and 79 to 81; these read SSYGHV and TRF. An NAD(+)-binding site is contributed by tyrosine 12. Tryptophan 99 lines the substrate pocket. Residues 114–120 and histidine 135 each bind FMN; that span reads STGTQHG.

Belongs to the WrbA family. Requires FMN as cofactor.

The catalysed reaction is a quinone + NADH + H(+) = a quinol + NAD(+). The enzyme catalyses a quinone + NADPH + H(+) = a quinol + NADP(+). In Burkholderia cenocepacia (strain ATCC BAA-245 / DSM 16553 / LMG 16656 / NCTC 13227 / J2315 / CF5610) (Burkholderia cepacia (strain J2315)), this protein is NAD(P)H dehydrogenase (quinone).